Here is a 585-residue protein sequence, read N- to C-terminus: Neopullulanase 2 (585 aa).

6 residues coordinate Ca(2+): N143, D145, N148, D149, G169, and D171. Positions 244 and 323 each coordinate substrate. The active-site Nucleophile is D325. E354 functions as the Proton donor in the catalytic mechanism. Residues 420 to 421 (HD), D465, and R469 each bind substrate.

Belongs to the glycosyl hydrolase 13 family. In terms of assembly, monomer. Ca(2+) serves as cofactor.

It carries out the reaction Hydrolysis of pullulan to panose (6-alpha-D-glucosylmaltose).. Functionally, hydrolyzes pullulan efficiently but only a small amount of starch. Endohydrolysis of 1,4-alpha-glucosidic linkages in pullulan to form panose. Also cleaves (1-6)-alpha-glucosidic linkages to form maltotriose. This is Neopullulanase 2 (tvaII) from Thermoactinomyces vulgaris.